Here is a 235-residue protein sequence, read N- to C-terminus: Transmembrane emp24 domain-containing protein 9 (235 aa).

The N-terminal stretch at 1–37 (MAAERSLWVVGLCPGSRLGRVVRVLLLLLWFAARGGA) is a signal peptide. Residues 38–201 (LYFHIGETEK…FRQTSESTNQ (164 aa)) lie on the Lumenal side of the membrane. The GOLD domain occupies 47–145 (KKCFIEEIPD…MLRVHLDIQV (99 aa)). The segment at 121-160 (CLHSNSTKFSLFAGGMLRVHLDIQVGEHANDYAEIAAKDK) is required for interaction with STX17. The N-linked (GlcNAc...) asparagine glycan is linked to Asn125. The stretch at 154 to 184 (EIAAKDKLSELQLRVRQLVEQVEQIQKEQNY) forms a coiled coil. Residue Lys160 is modified to N6-acetyllysine. A helical transmembrane segment spans residues 202 to 222 (RVLWWSILQTLILVAIGVWQM). Residues 223-235 (RHLKSFFEAKKLV) lie on the Cytoplasmic side of the membrane. The short motif at 228–229 (FF) is the COPII vesicle coat-binding element. A COPI vesicle coat-binding motif is present at residues 228 to 235 (FFEAKKLV).

This sequence belongs to the EMP24/GP25L family. In terms of assembly, monomer and homodimer in endoplasmic reticulum. Predominantly monomeric and to lesser extent homodimeric in endoplasmic reticulum-Golgi intermediate compartment and cis-Golgi network. Probably oligomerizes with other members of the EMP24/GP25L family such as TMED2, TMED7 and TMED10. Interacts with TMED5. Interacts (via C-terminus) with COPG1; the interaction involves dimeric TMED9. Interacts with PTPN2 and SPAST. Interacts with STX17; the interaction is direct. In terms of processing, N-linked glycosylated containing high mannose.

It localises to the endoplasmic reticulum membrane. Its subcellular location is the golgi apparatus. It is found in the cis-Golgi network membrane. The protein resides in the endoplasmic reticulum-Golgi intermediate compartment membrane. The protein localises to the trans-Golgi network membrane. Appears to be involved in vesicular protein trafficking, mainly in the early secretory pathway. In COPI vesicle-mediated retrograde transport involved in the coatomer recruitment to membranes of the early secretory pathway. Increases coatomer-dependent activity of ARFGAP2. Thought to play a crucial role in the specific retention of p24 complexes in cis-Golgi membranes; specifically contributes to the coupled localization of TMED2 and TMED10 in the cis-Golgi network. May be involved in organization of intracellular membranes, such as of the ER-Golgi intermediate compartment and the Golgi apparatus. Involved in ER localization of PTPN2. This Bos taurus (Bovine) protein is Transmembrane emp24 domain-containing protein 9 (TMED9).